We begin with the raw amino-acid sequence, 375 residues long: UDP-4-amino-4,6-dideoxy-N-acetyl-beta-L-altrosamine transaminase (375 aa).

Residues Tyr-6, 26–29 (KQLT), Ala-56, and Ser-178 each bind substrate. The residue at position 183 (Lys-183) is an N6-(pyridoxal phosphate)lysine. Residues Asn-228 and 313–316 (QVHY) contribute to the substrate site.

It belongs to the DegT/DnrJ/EryC1 family.

The catalysed reaction is UDP-4-amino-4,6-dideoxy-N-acetyl-beta-L-altrosamine + 2-oxoglutarate = UDP-2-acetamido-2,6-dideoxy-beta-L-arabino-hex-4-ulose + L-glutamate. Catalyzes the second step in the biosynthesis of pseudaminic acid, a sialic-acid-like sugar that is used to modify flagellin. Uses UDP-2-acetamido-2,6-dideoxy-beta-L-arabino-4-hexulose as substrate producing UDP-4-amino-4,6-dideoxy-beta-L-AltNAc. The polypeptide is UDP-4-amino-4,6-dideoxy-N-acetyl-beta-L-altrosamine transaminase (pseC) (Helicobacter pylori (strain ATCC 700392 / 26695) (Campylobacter pylori)).